The sequence spans 130 residues: Large ribosomal subunit protein bL19 (130 aa).

Belongs to the bacterial ribosomal protein bL19 family.

In terms of biological role, this protein is located at the 30S-50S ribosomal subunit interface and may play a role in the structure and function of the aminoacyl-tRNA binding site. This chain is Large ribosomal subunit protein bL19, found in Burkholderia vietnamiensis (strain G4 / LMG 22486) (Burkholderia cepacia (strain R1808)).